The following is a 474-amino-acid chain: Dihydrolipoyl dehydrogenase (474 aa).

FAD-binding positions include glutamate 34–cysteine 42, lysine 51, and glycine 114. Cysteine 42 and cysteine 47 are joined by a disulfide. NAD(+)-binding positions include glycine 188–isoleucine 192, glutamate 211, valine 245, and serine 278–arginine 281. Residues aspartate 320 and alanine 328 each coordinate FAD. The active-site Proton acceptor is the histidine 453.

It belongs to the class-I pyridine nucleotide-disulfide oxidoreductase family. Homodimer. The cofactor is FAD.

Its subcellular location is the cytoplasm. The enzyme catalyses N(6)-[(R)-dihydrolipoyl]-L-lysyl-[protein] + NAD(+) = N(6)-[(R)-lipoyl]-L-lysyl-[protein] + NADH + H(+). Its function is as follows. The branched-chain alpha-keto dehydrogenase complex catalyzes the overall conversion of alpha-keto acids to acyl-CoA and CO(2). It contains multiple copies of 3 enzymatic components: branched-chain alpha-keto acid decarboxylase (E1), lipoamide acyltransferase (E2) and lipoamide dehydrogenase (E3). The chain is Dihydrolipoyl dehydrogenase (bfmBC) from Bacillus subtilis (strain 168).